An 870-amino-acid polypeptide reads, in one-letter code: Glycerol-3-phosphate acyltransferase (870 aa).

The tract at residues 1–27 (MPKKNSPLLPKETTPTQSSVDTSGSSN) is disordered. The span at 13–27 (TTPTQSSVDTSGSSN) shows a compositional bias: polar residues. The short motif at 351–356 (HRSHID) is the HXXXXD motif element.

It belongs to the GPAT/DAPAT family.

Its subcellular location is the cell inner membrane. The enzyme catalyses sn-glycerol 3-phosphate + an acyl-CoA = a 1-acyl-sn-glycero-3-phosphate + CoA. It functions in the pathway phospholipid metabolism; CDP-diacylglycerol biosynthesis; CDP-diacylglycerol from sn-glycerol 3-phosphate: step 1/3. In Xylella fastidiosa (strain 9a5c), this protein is Glycerol-3-phosphate acyltransferase (plsB).